The sequence spans 298 residues: NAD kinase (298 aa).

Asp80 acts as the Proton acceptor in catalysis. Residues 80–81 (DG), 154–155 (ND), Arg182, Asp184, 195–200 (TAYALS), Ala219, and Gln253 contribute to the NAD(+) site.

Belongs to the NAD kinase family. Requires a divalent metal cation as cofactor.

It is found in the cytoplasm. It catalyses the reaction NAD(+) + ATP = ADP + NADP(+) + H(+). Its function is as follows. Involved in the regulation of the intracellular balance of NAD and NADP, and is a key enzyme in the biosynthesis of NADP. Catalyzes specifically the phosphorylation on 2'-hydroxyl of the adenosine moiety of NAD to yield NADP. The protein is NAD kinase of Acidovorax sp. (strain JS42).